A 460-amino-acid polypeptide reads, in one-letter code: MGKEDKTHINVVVIGHVDSGKSTTTGHLIYQCGGIDKRTIEKFEKEAAELGKGSFKYAWVLDKLKAERERGITIDIALWKFETPKYYVTVIDAPGHRDFIKNMITGTSQADCAILIIAAGTGEFEAGISKDGQTREHALLAYTLGVKQLIVAINKMDTANWAEARYQEIIKETSNFIKKVGFNPKAVAFVPISGFNGDNMLTPSTNCPWYKGWEKETKAGKFTGKTLLEAIDSIEPPKRPTDKPLRLPLQDVYKIGGIGTVPVGRIETGVLKPGMVVTFAPSNVTTEVKSVEMHHEQLAEGQPGDNVGFNVKNVSVKEIRRGNVAGDSKNDPPMGAASFTAQVIVMNHPGQVGAGYAPVLDCHTAHIACKFAELLEKIDRRTGKATESAPKFIKSGDSAIVKMIPSKPMCVEAFTDYPPLGRFAVRDMRQTVAVGVIKAVEKSSAAAAKVTKSAAKAAKK.

G2 carries the post-translational modification N,N,N-trimethylglycine. N6,N6-dimethyllysine; alternate is present on K3. An N6-methyllysine; alternate modification is found at K3. The region spanning 6–241 is the tr-type G domain; the sequence is KTHINVVVIG…DSIEPPKRPT (236 aa). A G1 region spans residues 15–22; sequence GHVDSGKS. 15–22 provides a ligand contact to GTP; sequence GHVDSGKS. The segment at 71–75 is G2; sequence GITID. K80 is subject to N6,N6,N6-trimethyllysine. The interval 92–95 is G3; the sequence is DAPG. GTP contacts are provided by residues 92 to 96 and 154 to 157; these read DAPGH and NKMD. A G4 region spans residues 154–157; it reads NKMD. The G5 stretch occupies residues 193–195; sequence SGF. The residue at position 317 (K317) is an N6,N6-dimethyllysine; alternate. N6-methyllysine; alternate is present on K317. Residue K391 is modified to N6-methyllysine.

Belongs to the TRAFAC class translation factor GTPase superfamily. Classic translation factor GTPase family. EF-Tu/EF-1A subfamily.

The protein localises to the cytoplasm. In terms of biological role, this protein promotes the GTP-dependent binding of aminoacyl-tRNA to the A-site of ribosomes during protein biosynthesis. This chain is Elongation factor 1-alpha (tef1), found in Hypocrea jecorina (Trichoderma reesei).